Consider the following 483-residue polypeptide: MKTLNRRDFPGAQYPERIIQFGEGNFLRAFVDWQIDLLNEHTDLNSGVVVVRPIETSFPPSLSTQDGLYTTIIRGLNEKGEAVSDARLIRSVNREISVYSEYDEFLKLAHNPEMRFVFSNTTEAGISYHAGDKFDDAPAVSYPAKLTRLLFERFSHFNGAQDKGWIIIPCELIDYNGDALRELVLRYAQEWALPEAFIQWLDQANSFCSTLVDRIVTGYPRDEVAKLEEELGYHDGFLDTAEHFYLFVIQGPKSLATELRLDKYPLNVLIVDDIKPYKERKVAILNGAHTALVPVAFQAGLDTVGEAMNDAEICAFVEKAIYEEIIPVLDLPRDELESFASAVTGRFRNPYIKHQLLSIALNGMTKFRTRILPQLLAGQKSNGTLPARLTFALAALIAFYRGERNGETYPVQDDAHWLERYQQLWSQHRNRVIGTQELVAIVLAEKDHWEQDLTQVPGLVEQVANDLDAILEKGMREAVRPLC.

Position 18–29 (18–29 (IIQFGEGNFLRA)) interacts with NAD(+).

Belongs to the mannitol dehydrogenase family. UxaB subfamily.

It catalyses the reaction D-altronate + NAD(+) = keto-D-tagaturonate + NADH + H(+). The protein operates within carbohydrate metabolism; pentose and glucuronate interconversion. The protein is Altronate oxidoreductase of Escherichia coli O7:K1 (strain IAI39 / ExPEC).